Consider the following 312-residue polypeptide: Transcription factor Ouib (312 aa).

The 76-residue stretch at 4 to 79 folds into the ZAD domain; that stretch reads IVCRVCGRQK…IKTQTKWLTI (76 aa). Zn(2+)-binding residues include Cys-6, Cys-9, Cys-52, and Cys-55. 5 C2H2-type zinc fingers span residues 167 to 189, 195 to 217, 223 to 245, 251 to 273, and 279 to 303; these read YICE…MRKH, FGCK…HRVH, FACR…ERTH, YVCE…MVIH, and FRCD…SMMH.

Expressed predominantly in the prothoracic gland during embryonic and larval development.

The protein resides in the nucleus. Transcription factor required for ecdysteroid production in the prothoracic gland by activating transcription of the ecdysteroid biosynthesis gene spok. Binds to the 5'-AGCTTTATTATTTAG-3' DNA sequence in the spok enhancer region. This is Transcription factor Ouib from Drosophila melanogaster (Fruit fly).